The sequence spans 21 residues: Dart gland peptide (21 aa).

Residues 1–21 form a disordered region; the sequence is SINNTGGSGNRRLDKNGFAGQ. Residue asparagine 3 is glycosylated (N-linked (GlcNAc...) asparagine).

The protein localises to the secreted. This Cornu aspersum (Brown garden snail) protein is Dart gland peptide.